The primary structure comprises 795 residues: Phenylalanine--tRNA ligase beta subunit (795 aa).

The region spanning 39–148 (AGTFNGVVVG…LDAPIGTDLR (110 aa)) is the tRNA-binding domain. Positions 401-476 (PKVNTVQLRR…RIYGYNSIPN (76 aa)) constitute a B5 domain. Mg(2+) is bound by residues aspartate 454, aspartate 460, glutamate 463, and glutamate 464. An FDX-ACB domain is found at 701-794 (SKFPANRRDL…VKQRFNAELR (94 aa)).

The protein belongs to the phenylalanyl-tRNA synthetase beta subunit family. Type 1 subfamily. As to quaternary structure, tetramer of two alpha and two beta subunits. It depends on Mg(2+) as a cofactor.

The protein resides in the cytoplasm. It carries out the reaction tRNA(Phe) + L-phenylalanine + ATP = L-phenylalanyl-tRNA(Phe) + AMP + diphosphate + H(+). The protein is Phenylalanine--tRNA ligase beta subunit (pheT) of Haemophilus influenzae (strain ATCC 51907 / DSM 11121 / KW20 / Rd).